Reading from the N-terminus, the 395-residue chain is Phosphoglycerate kinase (395 aa).

Substrate-binding positions include 21–23, Arg-36, 59–62, Arg-113, and Arg-146; these read DLN and HLGR. ATP contacts are provided by residues Lys-197, Glu-324, and 350-353; that span reads GGDT.

The protein belongs to the phosphoglycerate kinase family. As to quaternary structure, monomer.

It is found in the cytoplasm. It catalyses the reaction (2R)-3-phosphoglycerate + ATP = (2R)-3-phospho-glyceroyl phosphate + ADP. Its pathway is carbohydrate degradation; glycolysis; pyruvate from D-glyceraldehyde 3-phosphate: step 2/5. In Acinetobacter baylyi (strain ATCC 33305 / BD413 / ADP1), this protein is Phosphoglycerate kinase.